We begin with the raw amino-acid sequence, 28 residues long: M-poneritoxin-Da4b (28 aa).

At alanine 28 the chain carries Alanine amide.

In terms of tissue distribution, expressed by the venom gland.

It localises to the secreted. Functionally, the synthetic peptide has antimicrobial activity against the Gram-positive bacteria B.amyloliquefacies S499 (MIC=0.05 mM), L.monocytogenes 2231 and S.aureus ATCC 29213, against the Gram-negative bacteria P.putida BTP1, P.aeruginosa PaO1 and E.coli ATCC 10536, and against the fungi S.cerevisiae, R.mucilaginosa and C.cucumerinum. It is not active against the fungi F.oxysporum and B.cinerea. This is M-poneritoxin-Da4b from Dinoponera australis (Giant neotropical hunting ant).